We begin with the raw amino-acid sequence, 452 residues long: Probable ECA polymerase (452 aa).

A run of 11 helical transmembrane segments spans residues 6–26, 37–57, 63–83, 118–138, 155–175, 181–201, 207–227, 228–248, 341–361, 378–398, and 410–430; these read FSGL…LTWF, VFFS…TSVL, VGVA…CFYG, VILM…NGFL, GVAL…VYFL, AWLF…MIVG, IIIA…ISLW, MLVA…LKRY, LVVM…GLII, YKAA…IVLA, and VFFL…FWLF.

It belongs to the WzyE family. Probably part of a complex composed of WzxE, WzyE and WzzE.

The protein resides in the cell inner membrane. Its pathway is bacterial outer membrane biogenesis; enterobacterial common antigen biosynthesis. Probably involved in the polymerization of enterobacterial common antigen (ECA) trisaccharide repeat units. The chain is Probable ECA polymerase from Salmonella agona (strain SL483).